Consider the following 215-residue polypeptide: Cytochrome b6 (215 aa).

The helical transmembrane segment at 32–52 threads the bilayer; sequence IFYCLGGITLTCFLVQVATGF. Position 35 (cysteine 35) interacts with heme c. Residues histidine 86 and histidine 100 each coordinate heme b. The next 3 helical transmembrane spans lie at 90 to 110, 116 to 136, and 186 to 206; these read ASMM…TGGF, LTWV…VTGY, and LHTF…FLMI. Residues histidine 187 and histidine 202 each contribute to the heme b site.

The protein belongs to the cytochrome b family. PetB subfamily. As to quaternary structure, the 4 large subunits of the cytochrome b6-f complex are cytochrome b6, subunit IV (17 kDa polypeptide, PetD), cytochrome f and the Rieske protein, while the 4 small subunits are PetG, PetL, PetM and PetN. The complex functions as a dimer. Heme b serves as cofactor. Heme c is required as a cofactor.

It localises to the plastid. The protein resides in the chloroplast thylakoid membrane. Its function is as follows. Component of the cytochrome b6-f complex, which mediates electron transfer between photosystem II (PSII) and photosystem I (PSI), cyclic electron flow around PSI, and state transitions. The chain is Cytochrome b6 from Huperzia lucidula (Shining clubmoss).